Reading from the N-terminus, the 145-residue chain is D-aminoacyl-tRNA deacylase (145 aa).

The Gly-cisPro motif, important for rejection of L-amino acids motif lies at 137-138 (GP).

Belongs to the DTD family. Homodimer.

It localises to the cytoplasm. The catalysed reaction is glycyl-tRNA(Ala) + H2O = tRNA(Ala) + glycine + H(+). It catalyses the reaction a D-aminoacyl-tRNA + H2O = a tRNA + a D-alpha-amino acid + H(+). Functionally, an aminoacyl-tRNA editing enzyme that deacylates mischarged D-aminoacyl-tRNAs. Also deacylates mischarged glycyl-tRNA(Ala), protecting cells against glycine mischarging by AlaRS. Acts via tRNA-based rather than protein-based catalysis; rejects L-amino acids rather than detecting D-amino acids in the active site. By recycling D-aminoacyl-tRNA to D-amino acids and free tRNA molecules, this enzyme counteracts the toxicity associated with the formation of D-aminoacyl-tRNA entities in vivo and helps enforce protein L-homochirality. The chain is D-aminoacyl-tRNA deacylase from Shewanella pealeana (strain ATCC 700345 / ANG-SQ1).